A 317-amino-acid chain; its full sequence is ATP synthase gamma chain (317 aa).

It belongs to the ATPase gamma chain family. In terms of assembly, F-type ATPases have 2 components, CF(1) - the catalytic core - and CF(0) - the membrane proton channel. CF(1) has five subunits: alpha(3), beta(3), gamma(1), delta(1), epsilon(1). CF(0) has three main subunits: a, b and c.

Its subcellular location is the cellular thylakoid membrane. Produces ATP from ADP in the presence of a proton gradient across the membrane. The gamma chain is believed to be important in regulating ATPase activity and the flow of protons through the CF(0) complex. The sequence is that of ATP synthase gamma chain from Acaryochloris marina (strain MBIC 11017).